We begin with the raw amino-acid sequence, 160 residues long: Putative pre-16S rRNA nuclease (160 aa).

The protein belongs to the YqgF nuclease family.

Its subcellular location is the cytoplasm. Could be a nuclease involved in processing of the 5'-end of pre-16S rRNA. This Chelativorans sp. (strain BNC1) protein is Putative pre-16S rRNA nuclease.